Here is a 346-residue protein sequence, read N- to C-terminus: Probable electron transfer flavoprotein subunit alpha, mitochondrial (346 aa).

285-313 (LYVAIGISGAIQHLAGMKESKMIIAINKD) serves as a coordination point for FAD.

Belongs to the ETF alpha-subunit/FixB family. In terms of assembly, heterodimer of an alpha and a beta subunit. The cofactor is FAD.

The protein localises to the mitochondrion matrix. Functionally, the electron transfer flavoprotein serves as a specific electron acceptor for several dehydrogenases, including five acyl-CoA dehydrogenases, glutaryl-CoA and sarcosine dehydrogenase. It transfers the electrons to the main mitochondrial respiratory chain via ETF-ubiquinone oxidoreductase (ETF dehydrogenase). The chain is Probable electron transfer flavoprotein subunit alpha, mitochondrial (ETF1) from Cryptococcus gattii serotype B (strain WM276 / ATCC MYA-4071) (Filobasidiella gattii).